The sequence spans 129 residues: Histone H3 (129 aa).

Residues 1-36 (MSRTKETARAKRTITSKKSKKAPSGASGVKRSHRRW) form a disordered region. Residues 10–21 (AKRTITSKKSKK) are compositionally biased toward basic residues.

This sequence belongs to the histone H3 family. In terms of assembly, the nucleosome is a histone octamer containing two molecules each of H2A, H2B, H3 and H4 assembled in one H3-H4 heterotetramer and two H2A-H2B heterodimers. The octamer wraps approximately 147 bp of DNA.

It is found in the nucleus. The protein localises to the chromosome. In terms of biological role, core component of nucleosome. Nucleosomes wrap and compact DNA into chromatin, limiting DNA accessibility to the cellular machineries which require DNA as a template. Histones thereby play a central role in transcription regulation, DNA repair, DNA replication and chromosomal stability. DNA accessibility is regulated via a complex set of post-translational modifications of histones, also called histone code, and nucleosome remodeling. The polypeptide is Histone H3 (Leishmania infantum).